We begin with the raw amino-acid sequence, 530 residues long: Polyprotein pp62 (530 aa).

The protein belongs to the asfivirus polyprotein pp62 family. As to quaternary structure, monomer. Predominantly exists as a monomer, with very little dimers. Homodimerization seems to be linked to low pH. Homodimer; disulfide-linked. Homotrimer; disulfide-linked. Homohexamer. Post-translationally, monoubiquitinated in vitro by viral UBCv1. Specific enzymatic cleavages in vivo by the viral pS273R protease yield mature proteins.

The protein resides in the host cytoplasm. Its subcellular location is the host perinuclear region. The protein localises to the virion. In terms of biological role, essential for the correct assembly and maturation of the core of the virion. Functionally, component of the core shell. Binds to phosphatidylserine, which may enable the core shell binding with the inner membrane. Its function is as follows. Component of the core shell. Binds to phosphatidylserine and DNA, which may link the core shell to the inner membrane and to the viral nucleoid. Component of the core shell. The polypeptide is Polyprotein pp62 (African swine fever virus (strain Badajoz 1971 Vero-adapted) (Ba71V)).